A 3970-amino-acid chain; its full sequence is Polyketide synthase-nonribosomal peptide synthetase hybrid himA (3970 aa).

Residues 8–443 (SEPIAIIGSA…GTNSHAILES (436 aa)) form the Ketosynthase family 3 (KS3) domain. Residues cysteine 181, histidine 320, and histidine 363 each act as for beta-ketoacyl synthase activity in the active site. A malonyl-CoA:ACP transacylase (MAT) domain region spans residues 561–876 (IFTGQGAQWP…PYAGLLHRGR (316 aa)). Residues 949–1083 (HELLGVRTSD…GMVHLHLGEP (135 aa)) are N-terminal hotdog fold. Residues 949–1253 (HELLGVRTSD…GLTVVALSST (305 aa)) form a dehydratase (DH) domain region. The 308-residue stretch at 949–1256 (HELLGVRTSD…VVALSSTGPA (308 aa)) folds into the PKS/mFAS DH domain. Histidine 981 (proton acceptor; for dehydratase activity) is an active-site residue. The interval 1098–1256 (GLNRVDLDEF…VVALSSTGPA (159 aa)) is C-terminal hotdog fold. Aspartate 1158 acts as the Proton donor; for dehydratase activity in catalysis. Positions 2060–2234 (TYVMIGLTGE…ASVLDIGMVS (175 aa)) are ketoreductase (KR) domain. The Carrier 1 domain maps to 2342-2419 (AIAAILTESF…TLAEEVAKEL (78 aa)). At serine 2379 the chain carries O-(pantetheine 4'-phosphoryl)serine. Residues 2420 to 2482 (FEDRSTSAPP…NDDSDPTAQC (63 aa)) are disordered. The segment covering 2445–2466 (GSSTDPSSNSDSKSGFDGFSSD) has biased composition (low complexity). The segment covering 2467-2477 (DSSDIANDDSD) has biased composition (acidic residues). The segment at 2487 to 2919 (PMSLSQARMW…ATTPTERVAT (433 aa)) is condensation (C) domain. Positions 2974-3381 (SYKAMSDRVN…LGDIANAILK (408 aa)) are adenylation (A) domain. A disordered region spans residues 3466-3495 (RPLPASGDEDGDEDTETETGADADADAGAD). Over residues 3472-3492 (GDEDGDEDTETETGADADADA) the composition is skewed to acidic residues. The region spanning 3496-3574 (TTLSDIHSKL…AIAERILRGV (79 aa)) is the Carrier 2 domain. Serine 3534 is modified (O-(pantetheine 4'-phosphoryl)serine). The tract at residues 3633–3866 (LTGATGFLGR…FIRVETVAEE (234 aa)) is reductase (R) domain.

The protein in the C-terminal section; belongs to the NRP synthetase family.

The protein operates within secondary metabolite biosynthesis. Polyketide synthase-nonribosomal peptide synthetase hybrid; part of the him gene cluster that mediates the biosynthesis of himeic acid A, a ubiquitin-activating enzyme (E1) inhibitor. First, himA, together with the trans-enoyl reductase himH, catalyzes the formation of apolyketide chain, which is then condensed with leucine by the NRPS activity of himA. Dieckmann cyclization and release from himA gives a tetramic acid intermediate as the product of himA PKS-NRPS. HimG then catalyzes alpha-oxidation of the tetramic acid ring, with a subsequent rearrangement to yield apyrone intermediate. Two terminal methyl groups of polyketide and amide side chains are oxidized to carboxylic acids by himC cytochrome P450 monooxygenase to form himeic acid A. Himeic acid A is further converted to himeic acids B and C during culture growth. No gene responsible for pyrone to pyridone conversion was found in the him gene cluster and himeic acid A is non-enzymatically converted to himeic acid C by the incorporation of an ammonium nitrogen atom in a pH5 buffer, and to himeic acid B at a conversion ratio of 50% during incubation in MeOH for 5 days. This is Polyketide synthase-nonribosomal peptide synthetase hybrid himA from Aspergillus japonicus.